We begin with the raw amino-acid sequence, 224 residues long: UPF0758 protein PSPA7_6095 (224 aa).

Residues 102-224 (VLESPQAVRD…PLSLAEYGWM (123 aa)) form the MPN domain. Zn(2+) is bound by residues H173, H175, and D186. The JAMM motif signature appears at 173-186 (HNHPSGDARPSLAD).

The protein belongs to the UPF0758 family.

This Pseudomonas paraeruginosa (strain DSM 24068 / PA7) (Pseudomonas aeruginosa (strain PA7)) protein is UPF0758 protein PSPA7_6095.